The following is a 213-amino-acid chain: Probable septum site-determining protein MinC (213 aa).

Belongs to the MinC family. As to quaternary structure, interacts with MinD and FtsZ.

Functionally, cell division inhibitor that blocks the formation of polar Z ring septums. Rapidly oscillates between the poles of the cell to destabilize FtsZ filaments that have formed before they mature into polar Z rings. Prevents FtsZ polymerization. The chain is Probable septum site-determining protein MinC from Clostridium botulinum (strain Eklund 17B / Type B).